The following is a 211-amino-acid chain: MCPGNWLWASMTFMARFSRGSSRSPVRTRGSLEEMPSVHHPFLNVFELERLLYTGKTACNHADEVWPGLYLGDQDMANNRRELRRLGITHVLNASHNRWRGTPEAYEGLGIRYLGVEAHDSPAFDMSIHFQTAADFIHRALSQPGGKILVHCAVGVSRSATLVLAYLMLYHHFTLVEAIKKVKDHRGITPNRGFLRQLLALDRRLRQGLEA.

A Tyrosine-protein phosphatase domain is found at 60 to 207 (NHADEVWPGL…LLALDRRLRQ (148 aa)). The active-site Phosphocysteine intermediate is C152.

Belongs to the protein-tyrosine phosphatase family. Non-receptor class dual specificity subfamily. Interacts with HSF4. In terms of tissue distribution, brain and skeletal muscle. In the brain it is expressed ubiquitously except in the hippocampus.

Its subcellular location is the cytoplasm. The protein localises to the nucleus. It localises to the golgi apparatus. It catalyses the reaction O-phospho-L-tyrosyl-[protein] + H2O = L-tyrosyl-[protein] + phosphate. The catalysed reaction is O-phospho-L-seryl-[protein] + H2O = L-seryl-[protein] + phosphate. It carries out the reaction O-phospho-L-threonyl-[protein] + H2O = L-threonyl-[protein] + phosphate. In terms of biological role, inactivates MAPK1 and MAPK3 which leads to dephosphorylation of heat shock factor protein 4 and a reduction in its DNA-binding activity. In Mus musculus (Mouse), this protein is Dual specificity protein phosphatase 26 (Dusp26).